The chain runs to 484 residues: MKFKQDFFTQLPEFYAQVYPQGISNPHWLAWSEDVAKLIDLQQPTDALLQGLSGNAAVEGASYYAQVYSGHQFGGYTPRLGDGRSIILGEALGPQGAWDVALKGGGPTPYSRHGDGRAVMRSAVREFLVSEALHHLGVPTTRALAVIGSDMPVWRESQETAAITVRLARSHIRFGHFEFFCHSERGQADKLTQLLNFTLKQHYPHLSCDLAGYKAWFLQVVQDTAKLIAHWQAIGFAHGVMNTDNMSILGDSFDFGPFAFLDTFQEDFICNHSDPEGRYAFGQQPGIGLWNLQRLAQALTPVIPSDDLIAALNQYQHALVQHYLMLMRAKLGLAERADSTAEQDQQDLELIGRFTVLMEKNQLDYSNTWRRFGQLDPSSAHSSLRDDFIDLNEFDAWYQAYQTRLGKVTDIEAWQQARNSVNPKYILRNYLAQEAIIAVEEGNLAPLERLHQVLRQPFAEQVEHEDLAKRPPDWGQGLIMSCSS.

8 residues coordinate ATP: Gly81, Gly83, Arg84, Lys103, Asp115, Gly116, Arg166, and Arg173. Asp244 (proton acceptor) is an active-site residue. Residues Asn245 and Asp254 each contribute to the Mg(2+) site. Asp254 serves as a coordination point for ATP.

This sequence belongs to the SELO family. The cofactor is Mg(2+). Requires Mn(2+) as cofactor.

The catalysed reaction is L-seryl-[protein] + ATP = 3-O-(5'-adenylyl)-L-seryl-[protein] + diphosphate. It carries out the reaction L-threonyl-[protein] + ATP = 3-O-(5'-adenylyl)-L-threonyl-[protein] + diphosphate. It catalyses the reaction L-tyrosyl-[protein] + ATP = O-(5'-adenylyl)-L-tyrosyl-[protein] + diphosphate. The enzyme catalyses L-histidyl-[protein] + UTP = N(tele)-(5'-uridylyl)-L-histidyl-[protein] + diphosphate. The catalysed reaction is L-seryl-[protein] + UTP = O-(5'-uridylyl)-L-seryl-[protein] + diphosphate. It carries out the reaction L-tyrosyl-[protein] + UTP = O-(5'-uridylyl)-L-tyrosyl-[protein] + diphosphate. Functionally, nucleotidyltransferase involved in the post-translational modification of proteins. It can catalyze the addition of adenosine monophosphate (AMP) or uridine monophosphate (UMP) to a protein, resulting in modifications known as AMPylation and UMPylation. This is Protein nucleotidyltransferase YdiU from Shewanella sp. (strain MR-7).